Consider the following 173-residue polypeptide: Alpha-crystallin A chain (173 aa).

The residue at position 1 (M1) is an N-acetylmethionine. The sHSP domain maps to 53–164 (NFLDSSNSGM…GDRSIPVTRD (112 aa)). Positions 101, 103, and 108 each coordinate Zn(2+). C132 and C143 are oxidised to a cystine. Residues 143 to 173 (CGPKSGGSESGRGDRSIPVTRDDKTNSTPSS) are disordered. Residues 153–167 (GRGDRSIPVTRDDKT) are compositionally biased toward basic and acidic residues.

The protein belongs to the small heat shock protein (HSP20) family. As to quaternary structure, heteropolymer composed of three CRYAA and one CRYAB subunits. Inter-subunit bridging via zinc ions enhances stability, which is crucial as there is no protein turn over in the lens. Zinc coordination is achieved at least by His-101, Glu-103 and His-108. His-101 and Glu-103 come from the same molecule within the oligomer, while His-108 residue is provided by another molecule. Can also form homodimers and homotetramers (dimers of dimers) which serve as the building blocks of homooligomers. Part of a complex required for lens intermediate filament formation composed of BFSP1, BFSP2 and CRYAA.

The protein resides in the cytoplasm. The protein localises to the nucleus. Functionally, contributes to the transparency and refractive index of the lens. May act as a chaperone, preventing aggregation of various proteins under a wide range of stress conditions. This chain is Alpha-crystallin A chain (cryaa), found in Psalidodon fasciatus (Banded astyanax).